The chain runs to 375 residues: 23S rRNA (uracil(747)-C(5))-methyltransferase RlmC (375 aa).

Residues cysteine 3, cysteine 11, cysteine 14, and cysteine 87 each coordinate [4Fe-4S] cluster. Residues glutamine 212, phenylalanine 241, glutamate 262, and asparagine 307 each contribute to the S-adenosyl-L-methionine site. The active-site Nucleophile is cysteine 334.

This sequence belongs to the class I-like SAM-binding methyltransferase superfamily. RNA M5U methyltransferase family. RlmC subfamily.

The enzyme catalyses uridine(747) in 23S rRNA + S-adenosyl-L-methionine = 5-methyluridine(747) in 23S rRNA + S-adenosyl-L-homocysteine + H(+). In terms of biological role, catalyzes the formation of 5-methyl-uridine at position 747 (m5U747) in 23S rRNA. In Escherichia coli O17:K52:H18 (strain UMN026 / ExPEC), this protein is 23S rRNA (uracil(747)-C(5))-methyltransferase RlmC.